We begin with the raw amino-acid sequence, 611 residues long: UvrABC system protein C (611 aa).

The GIY-YIG domain maps to 14-91; it reads TSPGCYIHKD…IKENQPKYNI (78 aa). In terms of domain architecture, UVR spans 196-231; sequence DQIIEDLRGKMAGAAQAMEFEKAAEYRDLIQSIGTL. Positions 587–611 are disordered; sequence KLNPKTQEQEQAQLREVAEPQIGLE.

It belongs to the UvrC family. As to quaternary structure, interacts with UvrB in an incision complex.

Its subcellular location is the cytoplasm. Functionally, the UvrABC repair system catalyzes the recognition and processing of DNA lesions. UvrC both incises the 5' and 3' sides of the lesion. The N-terminal half is responsible for the 3' incision and the C-terminal half is responsible for the 5' incision. This chain is UvrABC system protein C, found in Streptococcus sanguinis (strain SK36).